A 443-amino-acid chain; its full sequence is Alpha-amylase (443 aa).

The signal sequence occupies residues 1–24 (MHNTLFRTALLAAALGSFSHTASA). His-114 and Arg-196 together coordinate substrate. Asp-198 serves as the catalytic Nucleophile. Residue 201-202 (KH) coordinates substrate. The active-site Proton donor is Glu-223. Positions 228 and 287 each coordinate substrate.

The protein belongs to the glycosyl hydrolase 13 family.

The protein resides in the secreted. The catalysed reaction is Endohydrolysis of (1-&gt;4)-alpha-D-glucosidic linkages in polysaccharides containing three or more (1-&gt;4)-alpha-linked D-glucose units.. The polypeptide is Alpha-amylase (amyA) (Aeromonas hydrophila).